The chain runs to 467 residues: Uronate isomerase (467 aa).

This sequence belongs to the metallo-dependent hydrolases superfamily. Uronate isomerase family.

The catalysed reaction is D-glucuronate = D-fructuronate. The enzyme catalyses aldehydo-D-galacturonate = keto-D-tagaturonate. Its pathway is carbohydrate metabolism; pentose and glucuronate interconversion. This is Uronate isomerase from Clostridium acetobutylicum (strain ATCC 824 / DSM 792 / JCM 1419 / IAM 19013 / LMG 5710 / NBRC 13948 / NRRL B-527 / VKM B-1787 / 2291 / W).